A 79-amino-acid polypeptide reads, in one-letter code: Large ribosomal subunit protein uL24 (79 aa).

Belongs to the universal ribosomal protein uL24 family. In terms of assembly, part of the 50S ribosomal subunit.

Its function is as follows. One of two assembly initiator proteins, it binds directly to the 5'-end of the 23S rRNA, where it nucleates assembly of the 50S subunit. In terms of biological role, one of the proteins that surrounds the polypeptide exit tunnel on the outside of the subunit. This Lactobacillus johnsonii (strain CNCM I-12250 / La1 / NCC 533) protein is Large ribosomal subunit protein uL24.